The chain runs to 995 residues: Protein translocase subunit SecA (995 aa).

Residues glutamine 86, 104–108 (GEGKT), and aspartate 535 each bind ATP. Residues 883-911 (AQTVSSDGNGEVVRKPQRRSTPQIGRNEL) form a disordered region. Zn(2+) contacts are provided by cysteine 912, cysteine 914, cysteine 923, and histidine 924. Residues 939–995 (PSAPPASKALKSTPATQTAVAEEAAKIQAAINSGKLPPTQTTPRGRQAPSVPRGKKR) form a disordered region. Positions 957–969 (AVAEEAAKIQAAI) are enriched in low complexity.

The protein belongs to the SecA family. Monomer and homodimer. Part of the essential Sec protein translocation apparatus which comprises SecA, SecYEG and auxiliary proteins SecDF. Other proteins may also be involved. The cofactor is Zn(2+).

It is found in the cell membrane. It localises to the cytoplasm. It carries out the reaction ATP + H2O + cellular proteinSide 1 = ADP + phosphate + cellular proteinSide 2.. Functionally, part of the Sec protein translocase complex. Interacts with the SecYEG preprotein conducting channel. Has a central role in coupling the hydrolysis of ATP to the transfer of proteins into and across the cell membrane, serving as an ATP-driven molecular motor driving the stepwise translocation of polypeptide chains across the membrane. The polypeptide is Protein translocase subunit SecA (Chloroflexus aurantiacus (strain ATCC 29366 / DSM 635 / J-10-fl)).